The chain runs to 414 residues: Clusterin-associated protein 1 (414 aa).

Positions 198-291 (KTKDLLNNVA…ERFEEAKNTL (94 aa)) form a coiled coil. Residues 305–414 (LLKSGSNDDS…EPLDESDNDF (110 aa)) form a disordered region. Composition is skewed to acidic residues over residues 312–328 (DDSD…DSEL) and 360–389 (DSDD…EDES). A phosphoserine mark is found at Ser-314, Ser-324, and Ser-326. Ser-410 carries the phosphoserine modification.

It belongs to the CLUAP1 family. As to quaternary structure, interacts with CLU/clusterin. Interacts with UBXN10; the interaction is direct.

It is found in the cell projection. Its subcellular location is the cilium. The protein resides in the nucleus. Required for cilia biogenesis. Appears to function within the multiple intraflagellar transport complex B (IFT-B). Key regulator of hedgehog signaling. The sequence is that of Clusterin-associated protein 1 (CLUAP1) from Macaca fascicularis (Crab-eating macaque).